A 394-amino-acid chain; its full sequence is 1-deoxy-D-xylulose 5-phosphate reductoisomerase (394 aa).

8 residues coordinate NADPH: T10, G11, S12, I13, G38, R39, N40, and N123. K124 serves as a coordination point for 1-deoxy-D-xylulose 5-phosphate. Residue E125 participates in NADPH binding. Position 149 (D149) interacts with Mn(2+). Positions 150, 151, 175, and 198 each coordinate 1-deoxy-D-xylulose 5-phosphate. E151 contacts Mn(2+). Residue G204 participates in NADPH binding. 1-deoxy-D-xylulose 5-phosphate contacts are provided by S211, N216, K217, and E220. E220 serves as a coordination point for Mn(2+).

Belongs to the DXR family. The cofactor is Mg(2+). It depends on Mn(2+) as a cofactor.

It carries out the reaction 2-C-methyl-D-erythritol 4-phosphate + NADP(+) = 1-deoxy-D-xylulose 5-phosphate + NADPH + H(+). It functions in the pathway isoprenoid biosynthesis; isopentenyl diphosphate biosynthesis via DXP pathway; isopentenyl diphosphate from 1-deoxy-D-xylulose 5-phosphate: step 1/6. In terms of biological role, catalyzes the NADPH-dependent rearrangement and reduction of 1-deoxy-D-xylulose-5-phosphate (DXP) to 2-C-methyl-D-erythritol 4-phosphate (MEP). The polypeptide is 1-deoxy-D-xylulose 5-phosphate reductoisomerase (Cereibacter sphaeroides (strain ATCC 17023 / DSM 158 / JCM 6121 / CCUG 31486 / LMG 2827 / NBRC 12203 / NCIMB 8253 / ATH 2.4.1.) (Rhodobacter sphaeroides)).